Consider the following 216-residue polypeptide: Urease accessory protein UreG (216 aa).

Residue 25 to 32 participates in GTP binding; sequence GPVGSGKT.

The protein belongs to the SIMIBI class G3E GTPase family. UreG subfamily. Homodimer. UreD, UreF and UreG form a complex that acts as a GTP-hydrolysis-dependent molecular chaperone, activating the urease apoprotein by helping to assemble the nickel containing metallocenter of UreC. The UreE protein probably delivers the nickel.

The protein localises to the cytoplasm. In terms of biological role, facilitates the functional incorporation of the urease nickel metallocenter. This process requires GTP hydrolysis, probably effectuated by UreG. This is Urease accessory protein UreG from Burkholderia mallei (strain NCTC 10247).